The following is a 503-amino-acid chain: Plant-specific TFIIB-related protein 1 (503 aa).

A TFIIB-type zinc finger spans residues 1–33 (MKCPYCSSAQGRCTTTSSGRSITECSSCGRVME). Disordered regions lie at residues 328–366 (PEKA…AKPI), 411–431 (NAMD…LGDK), 436–455 (IYLR…TGIS), and 468–503 (GSSS…HGDF). The span at 333–346 (PTTTISTTRSTTPR) shows a compositional bias: low complexity. A compositionally biased stretch (basic and acidic residues) spans 355–366 (FVEKDKPSAKPI).

Post-translationally, ubiquinated. Subsequent degradation by the proteasome pathway. As to expression, widely expressed.

It localises to the plastid. It is found in the chloroplast outer membrane. The protein localises to the nucleus. In terms of biological role, plant-specific TFIIB-related protein that may be involved in an intracellular signaling pathway between plastids and the nucleus. May act as general transcription factor (GTF) of RNA polymerase I-dependent transcription and rRNA synthesis. Forms a ternary complex with TBP2 and the rDNA promoter region. The protein is Plant-specific TFIIB-related protein 1 of Arabidopsis thaliana (Mouse-ear cress).